The following is a 158-amino-acid chain: UPF0758 protein VC_1786 (158 aa).

Residues 37 to 158 (TFARTENTTE…SVSFAERGWL (122 aa)) form the MPN domain. 3 residues coordinate Zn(2+): H108, H110, and D121. A JAMM motif motif is present at residues 108–121 (HNHPSGDPEPSQAD).

Belongs to the UPF0758 family.

The polypeptide is UPF0758 protein VC_1786 (Vibrio cholerae serotype O1 (strain ATCC 39315 / El Tor Inaba N16961)).